The chain runs to 337 residues: Ribosomal RNA small subunit methyltransferase C (337 aa).

It belongs to the methyltransferase superfamily. RsmC family. Monomer.

It localises to the cytoplasm. It carries out the reaction guanosine(1207) in 16S rRNA + S-adenosyl-L-methionine = N(2)-methylguanosine(1207) in 16S rRNA + S-adenosyl-L-homocysteine + H(+). Functionally, specifically methylates the guanine in position 1207 of 16S rRNA in the 30S particle. The polypeptide is Ribosomal RNA small subunit methyltransferase C (Acinetobacter baumannii (strain ACICU)).